Reading from the N-terminus, the 218-residue chain is Ribose-5-phosphate isomerase A (218 aa).

Substrate-binding positions include 28-31 (TGST), 81-84 (DGAD), and 94-97 (KGGG). The active-site Proton acceptor is glutamate 103. Lysine 121 lines the substrate pocket.

The protein belongs to the ribose 5-phosphate isomerase family. As to quaternary structure, homodimer.

The catalysed reaction is aldehydo-D-ribose 5-phosphate = D-ribulose 5-phosphate. It participates in carbohydrate degradation; pentose phosphate pathway; D-ribose 5-phosphate from D-ribulose 5-phosphate (non-oxidative stage): step 1/1. In terms of biological role, catalyzes the reversible conversion of ribose-5-phosphate to ribulose 5-phosphate. The protein is Ribose-5-phosphate isomerase A of Aliivibrio fischeri (strain ATCC 700601 / ES114) (Vibrio fischeri).